We begin with the raw amino-acid sequence, 115 residues long: NAD(P)H-quinone oxidoreductase subunit M (115 aa).

Belongs to the complex I NdhM subunit family. NDH-1 can be composed of about 15 different subunits; different subcomplexes with different compositions have been identified which probably have different functions.

The protein resides in the cellular thylakoid membrane. The enzyme catalyses a plastoquinone + NADH + (n+1) H(+)(in) = a plastoquinol + NAD(+) + n H(+)(out). The catalysed reaction is a plastoquinone + NADPH + (n+1) H(+)(in) = a plastoquinol + NADP(+) + n H(+)(out). NDH-1 shuttles electrons from an unknown electron donor, via FMN and iron-sulfur (Fe-S) centers, to quinones in the respiratory and/or the photosynthetic chain. The immediate electron acceptor for the enzyme in this species is believed to be plastoquinone. Couples the redox reaction to proton translocation, and thus conserves the redox energy in a proton gradient. Cyanobacterial NDH-1 also plays a role in inorganic carbon-concentration. The sequence is that of NAD(P)H-quinone oxidoreductase subunit M from Prochlorococcus marinus (strain MIT 9313).